Here is a 215-residue protein sequence, read N- to C-terminus: Pyrrolidone-carboxylate peptidase (215 aa).

Catalysis depends on residues Glu81, Cys144, and His168.

Belongs to the peptidase C15 family. As to quaternary structure, homotetramer.

Its subcellular location is the cytoplasm. The catalysed reaction is Release of an N-terminal pyroglutamyl group from a polypeptide, the second amino acid generally not being Pro.. In terms of biological role, removes 5-oxoproline from various penultimate amino acid residues except L-proline. This is Pyrrolidone-carboxylate peptidase from Bacillus velezensis (strain DSM 23117 / BGSC 10A6 / LMG 26770 / FZB42) (Bacillus amyloliquefaciens subsp. plantarum).